Here is a 458-residue protein sequence, read N- to C-terminus: UDP-N-acetylglucosamine 1-carboxyvinyltransferase (458 aa).

Position 34–35 (34–35) interacts with phosphoenolpyruvate; it reads KN. R104 is a UDP-N-acetyl-alpha-D-glucosamine binding site. C128 acts as the Proton donor in catalysis. C128 is modified (2-(S-cysteinyl)pyruvic acid O-phosphothioketal). UDP-N-acetyl-alpha-D-glucosamine is bound by residues D319 and I341.

The protein belongs to the EPSP synthase family. MurA subfamily.

It localises to the cytoplasm. It carries out the reaction phosphoenolpyruvate + UDP-N-acetyl-alpha-D-glucosamine = UDP-N-acetyl-3-O-(1-carboxyvinyl)-alpha-D-glucosamine + phosphate. The protein operates within cell wall biogenesis; peptidoglycan biosynthesis. Cell wall formation. Adds enolpyruvyl to UDP-N-acetylglucosamine. This Prochlorococcus marinus (strain MIT 9515) protein is UDP-N-acetylglucosamine 1-carboxyvinyltransferase.